The chain runs to 113 residues: Ribosome-associated factor Y (113 aa).

Lys-66 is modified (N6-acetyllysine). Residues 91–113 form a disordered region; the sequence is KGEARRAATSVKDANFVEEVEEE.

This sequence belongs to the HPF/YfiA ribosome-associated protein family. YfiA subfamily. In terms of assembly, associates mainly with 70S ribosomes.

Its function is as follows. During stationary phase, prevents 70S dimer formation, probably in order to regulate translation efficiency during transition between the exponential and the stationary phases. In addition, during environmental stress such as cold shock or excessive cell density at stationary phase, stabilizes the 70S ribosome against dissociation, inhibits translation initiation and increase translation accuracy. When normal growth conditions are restored, is quickly released from the ribosome. This is Ribosome-associated factor Y from Escherichia coli O157:H7.